The sequence spans 452 residues: Retrograde protein of 51 kDa (452 aa).

Over residues 1 to 13 (MQKGAKIEDEGRQ) the composition is skewed to basic and acidic residues. The tract at residues 1–50 (MQKGAKIEDEGRQSRIQSRNFIIQRSDPRTRGSSVYSSRSSSYNVRSSIS) is disordered. Residues 1-75 (MQKGAKIEDE…KGNREKEKRE (75 aa)) are head. Positions 14–23 (SRIQSRNFII) are enriched in polar residues. The segment covering 33 to 50 (SSVYSSRSSSYNVRSSIS) has biased composition (low complexity). One can recognise an IF rod domain in the interval 72–424 (EKREMQNLNE…KLLEGEESRV (353 aa)). Residues 76–111 (MQNLNERLASYIEKVHFLDAQVKKLEAENEALRNRK) form a coil 1A region. The interval 112–121 (VEDLQPIRDA) is linker 1. A coil 1B region spans residues 122 to 259 (YENELRQARK…DLLDQLELLK (138 aa)). Serine 156 is subject to Sulfoserine. The segment at 260–278 (PEPIQIKGMDYADFWKSEL) is linker 12. Residues 279 to 424 (AKCVREINLA…KLLEGEESRV (146 aa)) form a coil 2 region. The tract at residues 425 to 452 (GLRTLVEQAIGTQSKGSASLKDAIQSSS) is tail.

This sequence belongs to the intermediate filament family.

The polypeptide is Retrograde protein of 51 kDa (RGP51) (Lymnaea stagnalis (Great pond snail)).